Reading from the N-terminus, the 21-residue chain is Maculatin-1.1 (21 aa).

At F21 the chain carries Phenylalanine amide.

As to expression, expressed by the skin dorsal glands.

The protein localises to the secreted. Functionally, maculatin-1.1 shows significant antibacterial activity against Gram-positive bacteria, less against Gram-negative bacteria. Maculatin-1.1.1 is inactive. This is Maculatin-1.1 from Ranoidea genimaculata (Brown-spotted tree frog).